The following is a 354-amino-acid chain: MSSFAVRHDWSRQEVEALFALPMNDLLFRAHSIHREVFDPNEVQISRLLSIKTGACPEDCKYCPQSARYDTGLEKERLLEIEKVLTEARAAKDAGATRFCMGAAWRNPHERDMPYLTDMVKEVKSMGLETCMTLGMLSAHQANQLAEAGLDYYNHNLDTSPEFYGDIITTRTYQDRLDTLSNVRAAGMKVCSGGIVGMGEQATDRAGLLQQLANLEQHPDSVPINMLVKVTGTPLDSVDDLDPLEFVRTIAVARILMPLSRVRLSAGRENMSDELQAMCFFAGANSIFYGCKLLTTPNPEENDDMSLFRRLGLKPEQGKAAIVEEDAAVVARAAREQQAEGEAKTKPLFYDAAN.

The 228-residue stretch at 41-268 folds into the Radical SAM core domain; that stretch reads NEVQISRLLS…LSRVRLSAGR (228 aa). Residues Cys56, Cys60, and Cys63 each contribute to the [4Fe-4S] cluster site. 4 residues coordinate [2Fe-2S] cluster: Cys100, Cys131, Cys191, and Arg263.

This sequence belongs to the radical SAM superfamily. Biotin synthase family. Homodimer. The cofactor is [4Fe-4S] cluster. Requires [2Fe-2S] cluster as cofactor.

The catalysed reaction is (4R,5S)-dethiobiotin + (sulfur carrier)-SH + 2 reduced [2Fe-2S]-[ferredoxin] + 2 S-adenosyl-L-methionine = (sulfur carrier)-H + biotin + 2 5'-deoxyadenosine + 2 L-methionine + 2 oxidized [2Fe-2S]-[ferredoxin]. It participates in cofactor biosynthesis; biotin biosynthesis; biotin from 7,8-diaminononanoate: step 2/2. Functionally, catalyzes the conversion of dethiobiotin (DTB) to biotin by the insertion of a sulfur atom into dethiobiotin via a radical-based mechanism. The polypeptide is Biotin synthase (Shewanella amazonensis (strain ATCC BAA-1098 / SB2B)).